Reading from the N-terminus, the 231-residue chain is NADH-quinone oxidoreductase subunit C (231 aa).

The protein belongs to the complex I 30 kDa subunit family. As to quaternary structure, NDH-1 is composed of 14 different subunits. Subunits NuoB, C, D, E, F, and G constitute the peripheral sector of the complex.

Its subcellular location is the cell membrane. It carries out the reaction a quinone + NADH + 5 H(+)(in) = a quinol + NAD(+) + 4 H(+)(out). Its function is as follows. NDH-1 shuttles electrons from NADH, via FMN and iron-sulfur (Fe-S) centers, to quinones in the respiratory chain. The immediate electron acceptor for the enzyme in this species is believed to be a menaquinone. Couples the redox reaction to proton translocation (for every two electrons transferred, four hydrogen ions are translocated across the cytoplasmic membrane), and thus conserves the redox energy in a proton gradient. The protein is NADH-quinone oxidoreductase subunit C of Mycobacterium sp. (strain JLS).